The sequence spans 596 residues: MEDHNLEEFRQRWQEELAHSQVLRRRRRLEAGERRPRRPEAGARGEPASGYLGLAQGLLEGAGRPPAPRPGRTDRKDVSSRSRSPPDRDAAEPEPLVDQLIRDLNEMDDVPFFDVHLPYELAINIFQYLNRRELGLCAQVSKTWKVIAEDEVLWYRLCRQEGHLPHSRFSDYTCWKLILQECLAPVHLIRPSWMNRKGAVSELEHVPDAVLCDVRSHDGVVIAGYTSGEVRVWDTRTWDYVAPFLESESEEEDPGMQPYVSFVRINSSLAVAAYEDGILNVWDLRTGRFPIFRFEHDARIQALALSQEKPVVATASAFDVVMLYPNEEGNWHVASEFEVQKLVDYLEIVPNTGRYPVAIATAGDLVYLLKAEDSARTLHYVYGQPATCLDVSASQVAFGVKSLGWVYEGNKILVYSLEAERCLSKLGNALGDFTCVNIRDSPPNLMVSGNMDRRVRLHDLRTDKIALSLSAHQLGVSAVQMDDWKIVSGGEEGLVSVWDYRMNQKLWEVHSRHPVRYISFNSHSLITANVPYEKVLRNSDLDNFACHRRHRGLIHAYEFAVDQLAFQSPLPICRLPRDTVAGYSYDLALSFPYDSI.

Methionine 1 carries the post-translational modification N-acetylmethionine. A disordered region spans residues 21–95 (QVLRRRRRLE…PDRDAAEPEP (75 aa)). Over residues 29-43 (LEAGERRPRRPEAGA) the composition is skewed to basic and acidic residues. Low complexity predominate over residues 44-64 (RGEPASGYLGLAQGLLEGAGR). Residues 71–91 (GRTDRKDVSSRSRSPPDRDAA) are compositionally biased toward basic and acidic residues. Phosphoserine occurs at positions 82 and 84. Residues 111 to 157 (PFFDVHLPYELAINIFQYLNRRELGLCAQVSKTWKVIAEDEVLWYRL) form the F-box domain. WD repeat units follow at residues 199-248 (AVSE…LESE), 257-297 (QPYV…FEHD), 298-338 (ARIQ…SEFE), 339-381 (VQKL…LHYV), 382-427 (YGQP…SKLG), 428-473 (NALG…SAHQ), 474-511 (LGVSAVQMDDWKIVSGGEEGLVSVWDYRMNQKLWEVHS), and 512-559 (RHPV…AYEF).

In terms of assembly, component of the Cul7-RING(FBXW8) complex consisting of CUL7, RBX1, SKP1 and FBXW8; within the complex interacts with CUL7 and SKP1. Interacts with GLMN isoform 1. Interacts with OBSL1, CUL1, CUL2, CCT6B, PFDN5, CCT2, CCT3, CCT6A, CCT7, VBP1, CCDC8, ARF1, TRIP13, PDCD5 and GORASP1. Interacts with MAP4K1/HPK1 (when autophosphorylated). Associated component of the 3M complex. Interacts with POUF51 (when phosphorylated on 'Ser-347'). In terms of processing, phosphorylation at Ser-84 by mTORC2 promotes FBXW8 stabilization, allowing its translocation to the cytosol in response to insulin. In terms of tissue distribution, expressed in placenta and embryonic brain (at protein level).

It localises to the cytoplasm. It is found in the perinuclear region. The protein localises to the golgi apparatus. Its subcellular location is the cytosol. It functions in the pathway protein modification; protein ubiquitination. Functionally, substrate-recognition component of the Cul7-RING(FBXW8) ubiquitin ligase complex, which mediates the ubiquitination and subsequent proteasomal degradation of target proteins. The Cul7-RING(FBXW8) complex mediates ubiquitination and consequent degradation of GORASP1, acting as a component of the ubiquitin ligase pathway that regulates Golgi morphogenesis and dendrite patterning in brain. Mediates ubiquitination and degradation of IRS1 in a mTOR-dependent manner: the Cul7-RING(FBXW8) complex recognizes and binds IRS1 previously phosphorylated by S6 kinase (RPS6KB1 or RPS6KB2). The Cul7-RING(FBXW8) complex also mediates ubiquitination of MAP4K1/HPK1: recognizes and binds autophosphorylated MAP4K1/HPK1, leading to its degradation, thereby affecting cell proliferation and differentiation. The Cul7-RING(FBXW8) complex also mediates ubiquitination of phosphorylated cyclin-D1 (CCND1). The Cul7-RING(FBXW8) complex is however not a major regulator of CCND1 stability during the G1/S transition. Associated component of the 3M complex, suggesting that it mediates some of 3M complex functions. This Rattus norvegicus (Rat) protein is F-box/WD repeat-containing protein 8 (Fbxw8).